Consider the following 21-residue polypeptide: Buforin-2 (21 aa).

The residue at position 21 (Lys-21) is an N6-(2-hydroxyisobutyryl)lysine; alternate.

It belongs to the histone H2A family. Expressed by the skin glands.

It localises to the secreted. Functionally, antimicrobial peptide with potent activity against some Gram-positive and Gram-negative bacteria. Does not permeabilize membrane, but internalizes into bacterial cells and alter specific gene expression involved in bacterial resistance mechanisms. Has the ability to agglutinate E.coli, and lipid vesicles. Shows a weak hemolytic activity, and is not cytotoxic to monocytes. The chain is Buforin-2 from Sphaenorhynchus lacteus (Orinoco lime treefrog).